An 825-amino-acid polypeptide reads, in one-letter code: Probable inorganic carbon transporter subunit DabA (825 aa).

Residues Cys-334, Asp-336, His-521, and Cys-536 each coordinate Zn(2+).

The protein belongs to the inorganic carbon transporter (TC 9.A.2) DabA family. As to quaternary structure, forms a complex with DabB. Zn(2+) is required as a cofactor.

It localises to the cell inner membrane. In terms of biological role, part of an energy-coupled inorganic carbon pump. The protein is Probable inorganic carbon transporter subunit DabA of Acidithiobacillus ferrooxidans (strain ATCC 23270 / DSM 14882 / CIP 104768 / NCIMB 8455) (Ferrobacillus ferrooxidans (strain ATCC 23270)).